Here is a 455-residue protein sequence, read N- to C-terminus: UDP-glycosyltransferase 2 (455 aa).

It belongs to the UDP-glycosyltransferase family.

It catalyses the reaction exophillate + UDP-alpha-D-galactose = phaeomoniecin D + UDP + H(+). Its pathway is secondary metabolite biosynthesis. Functionally, catalyzes the second glycosylation step during phaeomoniecin D biosynthesis, the further O-galactosylation of exophillic acid (produced by the O-glycosyltransferase OGT1) to yield the 4-O-beta-D-galactoside phaeomoniecin D. This chain is UDP-glycosyltransferase 2, found in Phaeomoniella chlamydospora (Phaeoacremonium chlamydosporum).